A 170-amino-acid polypeptide reads, in one-letter code: Protein SprT (170 aa).

The SprT-like domain occupies 22–165 (LQLANQHLGT…RQCGEKLQFI (144 aa)). Histidine 78 lines the Zn(2+) pocket. The active site involves glutamate 79. A Zn(2+)-binding site is contributed by histidine 82.

The protein belongs to the SprT family. Zn(2+) serves as cofactor.

The protein localises to the cytoplasm. In Yersinia pseudotuberculosis serotype O:1b (strain IP 31758), this protein is Protein SprT.